The following is a 322-amino-acid chain: Ras association domain-containing protein 4 (322 aa).

Positions 96-161 (EASPQDSKVP…SKSRAPSEAQ (66 aa)) are disordered. Ser142 is modified (phosphoserine). Residues 175–264 (YNHKTSVFTP…KIFLMEADLS (90 aa)) enclose the Ras-associating domain. Positions 271–318 (VAQYIKFEMPVLDSFVEKLKEEEEREIIKLTMKFQALRLTMLQRLEQL) constitute an SARAH domain.

As to quaternary structure, interacts directly with activated KRAS in a GTP-dependent manner.

Functionally, potential tumor suppressor. May act as a KRAS effector protein. May promote apoptosis and cell cycle arrest. The polypeptide is Ras association domain-containing protein 4 (Rassf4) (Mus musculus (Mouse)).